A 582-amino-acid chain; its full sequence is Putative transcriptional regulator HVO_1357 (582 aa).

The 111-residue stretch at 19–129 (VVLVVDDDED…EVKETVEELL (111 aa)) folds into the Response regulatory domain. Residue aspartate 67 is modified to 4-aspartylphosphate. Residues 165 to 203 (LSDLRSRLEAVRAEHEAAIRNREAQLDRLNRTNELLRDV) are a coiled coil. The HTH bat-type domain occupies 517–569 (LTDRQRTVLETSLVSGYFEWPRGSTAEEVADSLGISPPTLHEHLRTAERKLIE).

Its function is as follows. May be part of a signal-dependent gene regulation cascade that is relevant to swimming motility. May be involved in the transcription regulation of target genes. This Haloferax volcanii (strain ATCC 29605 / DSM 3757 / JCM 8879 / NBRC 14742 / NCIMB 2012 / VKM B-1768 / DS2) (Halobacterium volcanii) protein is Putative transcriptional regulator HVO_1357.